The sequence spans 158 residues: Regulator of sigma D (158 aa).

It belongs to the Rsd/AlgQ family. As to quaternary structure, interacts with RpoD.

The protein localises to the cytoplasm. Functionally, binds RpoD and negatively regulates RpoD-mediated transcription activation by preventing the interaction between the primary sigma factor RpoD with the catalytic core of the RNA polymerase and with promoter DNA. May be involved in replacement of the RNA polymerase sigma subunit from RpoD to RpoS during the transition from exponential growth to the stationary phase. This chain is Regulator of sigma D, found in Escherichia coli O127:H6 (strain E2348/69 / EPEC).